Here is a 264-residue protein sequence, read N- to C-terminus: E3 ubiquitin-protein ligase MARCHF8 (264 aa).

The segment at 15 to 47 (LGHSVSRSSNISKAGSPTSVSAPSRFPRTSVTP) is disordered. The span at 16–47 (GHSVSRSSNISKAGSPTSVSAPSRFPRTSVTP) shows a compositional bias: polar residues. The segment at 45–106 (VTPSSQDICR…ELCKFEFIME (62 aa)) adopts an RING-CH-type zinc-finger fold. Residues C53, C56, C70, C72, H80, C83, C96, and C99 each coordinate Zn(2+). The next 2 membrane-spanning stretches (helical) occupy residues 130–150 (CSVT…YVLI) and 170–190 (FWTK…FMYV).

The protein localises to the cytoplasmic vesicle membrane. Its subcellular location is the lysosome membrane. It is found in the early endosome membrane. The catalysed reaction is S-ubiquitinyl-[E2 ubiquitin-conjugating enzyme]-L-cysteine + [acceptor protein]-L-lysine = [E2 ubiquitin-conjugating enzyme]-L-cysteine + N(6)-ubiquitinyl-[acceptor protein]-L-lysine.. Its pathway is protein modification; protein ubiquitination. In terms of biological role, E3 ubiquitin-protein ligase that mediates ubiquitination of cd86 and MHC class II proteins, such as hla-dr alpha and beta, and promotes their subsequent endocytosis and sorting to lysosomes via multivesicular bodies. The polypeptide is E3 ubiquitin-protein ligase MARCHF8 (marchf8) (Xenopus laevis (African clawed frog)).